The primary structure comprises 543 residues: Chaperonin GroEL (543 aa).

ATP is bound by residues Thr29–Pro32, Asp86–Thr90, Gly413, Asn476–Ala478, and Asp492.

Belongs to the chaperonin (HSP60) family. In terms of assembly, forms a cylinder of 14 subunits composed of two heptameric rings stacked back-to-back. Interacts with the co-chaperonin GroES.

The protein localises to the cytoplasm. It catalyses the reaction ATP + H2O + a folded polypeptide = ADP + phosphate + an unfolded polypeptide.. Functionally, together with its co-chaperonin GroES, plays an essential role in assisting protein folding. The GroEL-GroES system forms a nano-cage that allows encapsulation of the non-native substrate proteins and provides a physical environment optimized to promote and accelerate protein folding. This chain is Chaperonin GroEL, found in Streptococcus pyogenes serotype M49 (strain NZ131).